The primary structure comprises 130 residues: Small ribosomal subunit protein uS11 (130 aa).

The protein belongs to the universal ribosomal protein uS11 family. In terms of assembly, part of the 30S ribosomal subunit. Interacts with proteins S7 and S18. Binds to IF-3.

Located on the platform of the 30S subunit, it bridges several disparate RNA helices of the 16S rRNA. Forms part of the Shine-Dalgarno cleft in the 70S ribosome. The polypeptide is Small ribosomal subunit protein uS11 (Moorella thermoacetica (strain ATCC 39073 / JCM 9320)).